A 1971-amino-acid polypeptide reads, in one-letter code: Germinal-center associated nuclear protein (1971 aa).

Disordered regions lie at residues 1–50 and 214–406; these read MHPV…KSLA and PAFA…RGKS. The segment covering 8–29 has biased composition (polar residues); the sequence is GGQQPSAFAVSSSTTGTYQTKS. Arginine 32 carries the asymmetric dimethylarginine modification. The interval 33 to 335 is FG-repeats; the sequence is FGQPSLFGQN…RPRGGTLFGR (303 aa). Composition is skewed to polar residues over residues 38-50 and 214-224; these read LFGQ…KSLA and PAFASPLSNQN. Low complexity predominate over residues 232–253; sequence STSAFGSSNSSFSTFPTASPGS. Basic and acidic residues-rich tracts occupy residues 288 to 321 and 342 to 359; these read RKED…DKRP and KSNK…KESG. The interval 414 to 550 is DNA primase; sequence EEWIYSLGGV…AAGSLLSKSS (137 aa). Serine 424 carries the post-translational modification Phosphoserine. N6-acetyllysine occurs at positions 483 and 484. Phosphoserine occurs at positions 502, 531, and 550. In terms of domain architecture, PCI spans 768–951; sequence NNENMTKCLQ…RKSVFIGRKL (184 aa). Positions 1124–1162 form a coiled coil; it reads HVAAEEVSMERQRLEEEKQRAEEERLKQERELMLTQLSE. The segment at 1793–1840 is disordered; sequence RELQLSHGRSGMRSIHPPTSTFPTPLLHVHQKGKKKEESGREGSLSTE.

Belongs to the SAC3 family. As to quaternary structure, component of the nuclear pore complex (NPC)-associated TREX-2 complex (transcription and export complex 2), composed of at least GANP, 2 copies of ENY2, PCID2, SEM1/DSS1, and either centrin CETN2 or centrin CETN3. The TREX-2 complex also associates with ALYREF/ALY. Interacts with RNA polymerase II subunit POLR2A and with the transcription elongation factor SUPT5H/SPT5. Interacts (via FG-repeats) with NXF1; this interaction is not mediated by RNA. Interacts with nuclear envelope proteins NUP62, NUP153 and RANBP2/NUP358; interaction with NUP153 is required for full localization at the nuclear pore complex. Interacts with several RNA helicases, including DHX9, DDX21, and DDX39A/DDX39, and with DNA topoisomerase TOP2A. Directly interacts with AICDA/AID. Interacts with the glucocorticoid receptor NR3C1. Interacts with MCM3. In terms of processing, phosphorylation at Ser-502 is induced in B-cells by CD40-stimulation, but not by bacterial lipopolysaccharide (LPS). As to expression, expressed at low levels in lymphoid organs, including thymus, spleen and lymph nodes. Up-regulated in stimulated B-cells in spleen and Peyer's patch germinal centers (at protein level).

The protein resides in the cytoplasm. Its subcellular location is the nucleus. The protein localises to the nucleus envelope. It localises to the nuclear pore complex. It is found in the nucleoplasm. The protein resides in the chromosome. It carries out the reaction L-lysyl-[histone] + acetyl-CoA = N(6)-acetyl-L-lysyl-[histone] + CoA + H(+). Its function is as follows. As a component of the TREX-2 complex, involved in the export of mRNAs to the cytoplasm through the nuclear pores. Through the acetylation of histones, affects the assembly of nucleosomes at immunoglobulin variable region genes and promotes the recruitment and positioning of transcription complex to favor DNA cytosine deaminase AICDA/AID targeting, hence promoting somatic hypermutations. The sequence is that of Germinal-center associated nuclear protein (Mcm3ap) from Mus musculus (Mouse).